The following is a 457-amino-acid chain: Argininosuccinate lyase (457 aa).

It belongs to the lyase 1 family. Argininosuccinate lyase subfamily.

The protein localises to the cytoplasm. It catalyses the reaction 2-(N(omega)-L-arginino)succinate = fumarate + L-arginine. It functions in the pathway amino-acid biosynthesis; L-arginine biosynthesis; L-arginine from L-ornithine and carbamoyl phosphate: step 3/3. In Histophilus somni (strain 129Pt) (Haemophilus somnus), this protein is Argininosuccinate lyase.